We begin with the raw amino-acid sequence, 71 residues long: UPF0346 protein SPT_1257 (71 aa).

The protein belongs to the UPF0346 family.

This chain is UPF0346 protein SPT_1257, found in Streptococcus pneumoniae (strain Taiwan19F-14).